We begin with the raw amino-acid sequence, 261 residues long: Ribonuclease PH (261 aa).

Phosphate is bound by residues arginine 87 and 125–127; that span reads GTR.

It belongs to the RNase PH family. Homohexameric ring arranged as a trimer of dimers.

The enzyme catalyses tRNA(n+1) + phosphate = tRNA(n) + a ribonucleoside 5'-diphosphate. Its function is as follows. Phosphorolytic 3'-5' exoribonuclease that plays an important role in tRNA 3'-end maturation. Removes nucleotide residues following the 3'-CCA terminus of tRNAs; can also add nucleotides to the ends of RNA molecules by using nucleoside diphosphates as substrates, but this may not be physiologically important. Probably plays a role in initiation of 16S rRNA degradation (leading to ribosome degradation) during starvation. The sequence is that of Ribonuclease PH from Thermoanaerobacter pseudethanolicus (strain ATCC 33223 / 39E) (Clostridium thermohydrosulfuricum).